We begin with the raw amino-acid sequence, 240 residues long: uncharacterized protein (240 aa).

Asp-66 acts as the Proton acceptor in catalysis. Asp-129 is an active-site residue. Catalysis depends on His-131, which acts as the Proton acceptor.

The protein belongs to the glucosamine/galactosamine-6-phosphate isomerase family.

This is an uncharacterized protein from Escherichia coli (strain K12).